Here is a 364-residue protein sequence, read N- to C-terminus: Probable tartrate dehydrogenase/decarboxylase TtuC (364 aa).

The Mn(2+) site is built by D222, D246, and D250.

This sequence belongs to the isocitrate and isopropylmalate dehydrogenases family. Requires Mg(2+) as cofactor. Mn(2+) is required as a cofactor. It depends on K(+) as a cofactor.

The protein resides in the cytoplasm. The enzyme catalyses tartrate + NAD(+) = 2-hydroxy-3-oxosuccinate + NADH + H(+). It catalyses the reaction (2R,3S)-tartrate + NAD(+) = 2-hydroxy-3-oxosuccinate + NADH + H(+). The catalysed reaction is (2R,3R)-tartrate + NAD(+) = 2-hydroxy-3-oxosuccinate + NADH + H(+). It carries out the reaction (2R,3R)-tartrate + H(+) = (R)-glycerate + CO2. The enzyme catalyses (R)-malate + NAD(+) = pyruvate + CO2 + NADH. It participates in carbohydrate acid metabolism; tartrate degradation; 2-hydroxy-3-oxosuccinate from L-tartrate: step 1/1. It functions in the pathway carbohydrate acid metabolism; tartrate degradation; 2-hydroxy-3-oxosuccinate from meso-tartrate: step 1/1. The protein operates within carbohydrate acid metabolism; tartrate degradation; D-glycerate from L-tartrate: step 1/1. Its function is as follows. Has multiple catalytic activities. Apart from catalyzing the oxidation of (+)-tartrate to oxaloglycolate, also converts meso-tartrate to D-glycerate and catalyzes the oxidative decarboxylation of D-malate to pyruvate. The protein is Probable tartrate dehydrogenase/decarboxylase TtuC (ttuC) of Agrobacterium vitis (Rhizobium vitis).